The chain runs to 1174 residues: Ribonucleoside-diphosphate reductase large subunit-like protein (1174 aa).

The short motif at Pro50–Ala72 is the RIP homotypic interaction motif (RHIM) element. Disordered stretches follow at residues Ala170 to Pro269 and Ala291 to Ser325. 3 stretches are compositionally biased toward low complexity: residues Ala182 to Ala202, His233 to Ser243, and Ala291 to Thr316.

It belongs to the ribonucleoside diphosphate reductase large chain family. Self-assembles into homo-oligomeric amyloid fibrils. Interacts with host RIPK1 (via RIP homotypic interaction motif); this interaction inhibits RIPK1 ubiquitination thereby preventing effective activation of host NF-kappa-B. Interacts with host RIPK3 (via RIP homotypic interaction motif); this interaction disrupts RIPK3-RIPK1 interactions characteristic of TNF-alpha induced necroptosis, thereby suppressing this death pathway. Interacts (via RIP homotypic interaction motif) with host ZBP1 (via RIP homotypic interaction motif); this interaction inhibits recruitment of RIPK1 and RIPK3 to ZBP1 and prevents ZBP1-induced NF-kappa-B activation. Undergoes proteolytic cleavage, generating two peptides, a N-terminal and a 116 kDa. The N-terminal peptide retains RIPK1- and RIPK3-binding activity as well as cell death suppression activity.

Its subcellular location is the virion. The protein resides in the host cytoplasm. In terms of biological role, provides optimal viral replication conditions by promoting host cell survival and avoiding the host inflammatory response linked to NF-kappa-B activation. Blocks RIPK1 ubiquitination, thereby preventing NF-kappa-B activation and virally induced inflammatory response. Prevents host necroptosis by targeting RIPK3 thereby preventing the formation of necroptotic RIPK1-RIPK3 complexes. Also inhibits ZBP1-induced necroptosis. Does not have ribonucleotide reductase activity. Betaherpesviruses probably use another strategy to expand the dNTP pool in a quiescent host cell. In Murid herpesvirus 1 (strain Smith) (MuHV-1), this protein is Ribonucleoside-diphosphate reductase large subunit-like protein.